Consider the following 133-residue polypeptide: Small ribosomal subunit protein uS9 (133 aa).

It belongs to the universal ribosomal protein uS9 family.

This chain is Small ribosomal subunit protein uS9, found in Ureaplasma urealyticum serovar 10 (strain ATCC 33699 / Western).